The sequence spans 669 residues: Glutamate--cysteine ligase (669 aa).

Belongs to the glutamate--cysteine ligase type 3 family. Heterodimer of a catalytic heavy chain and a regulatory light chain.

It catalyses the reaction L-cysteine + L-glutamate + ATP = gamma-L-glutamyl-L-cysteine + ADP + phosphate + H(+). Its pathway is sulfur metabolism; glutathione biosynthesis; glutathione from L-cysteine and L-glutamate: step 1/2. In terms of biological role, catalyzes the ATP-dependent ligation of L-glutamate and L-cysteine and participates in the first and rate-limiting step in glutathione biosynthesis. In Schizosaccharomyces pombe (strain 972 / ATCC 24843) (Fission yeast), this protein is Glutamate--cysteine ligase (gcs1).